The primary structure comprises 535 residues: Signal transduction histidine-protein kinase AfsQ2 (535 aa).

Residues 1–30 (MTREHQGGTRGLAAARKGFWSGLRFTSLRL) are Cytoplasmic-facing. Residues 31-52 (RLVLVFGLVALTAAVSASGIAY) form a helical membrane-spanning segment. The Extracellular segment spans residues 53-198 (WLNREAVLTR…SLEPEAKDLN (146 aa)). The helical transmembrane segment at 199–219 (SLAWSLGIATALALLGSALLA) threads the bilayer. Over 220-535 (QALATTVLKP…DRGKDAKGQV (316 aa)) the chain is Cytoplasmic. An HAMP domain is found at 224–276 (TTVLKPVHRLGVAARRLGEGKLDTRLRVSGTDELADLSRTFNSAAENLEKRVA). The Histidine kinase domain maps to 291-510 (DMSHELRTPL…VFTLRLPQDP (220 aa)). A Phosphohistidine modification is found at His-294. Residues 493–535 (ENAPEGGAVFTLRLPQDPSPPADEDGGPDEETEDRGKDAKGQV) are disordered. Residues 514 to 525 (ADEDGGPDEETE) show a composition bias toward acidic residues. The segment covering 526–535 (DRGKDAKGQV) has biased composition (basic and acidic residues).

It is found in the cell membrane. The catalysed reaction is ATP + protein L-histidine = ADP + protein N-phospho-L-histidine.. In terms of biological role, forms part of a two-component regulatory system AfsQ1/AfsQ2 involved in secondary metabolism. May activate AfsQ1 by phosphorylation. The sequence is that of Signal transduction histidine-protein kinase AfsQ2 (afsQ2) from Streptomyces coelicolor (strain ATCC BAA-471 / A3(2) / M145).